Here is a 342-residue protein sequence, read N- to C-terminus: Surface presentation of antigens protein SpaS (342 aa).

A run of 6 helical transmembrane segments spans residues 28 to 48 (LTTVVIILVGTFTIISFFSLS), 70 to 90 (FFAVVIVFFKIIGFPLFFCVL), 133 to 153 (EFFKSILLLIILALTTYFFWI), 158 to 178 (IIFSQVFSSVDGLYLIWGRLF), 181 to 201 (IILFFLAFSILVIILDFVIEF), and 260 to 280 (HIAIGIYFNPEIAPAPFISLI).

Belongs to the type III secretion exporter family.

The protein localises to the cell inner membrane. In terms of biological role, required for surface presentation of invasion plasmid antigens. Could play a role in preserving the translocation competence of the ipa antigens. Required for invasion and for secretion of the three ipa proteins. This is Surface presentation of antigens protein SpaS (spaS) from Shigella flexneri.